Reading from the N-terminus, the 372-residue chain is Anhydro-N-acetylmuramic acid kinase (372 aa).

14–21 (GTSLDGVD) provides a ligand contact to ATP.

It belongs to the anhydro-N-acetylmuramic acid kinase family.

It carries out the reaction 1,6-anhydro-N-acetyl-beta-muramate + ATP + H2O = N-acetyl-D-muramate 6-phosphate + ADP + H(+). It participates in amino-sugar metabolism; 1,6-anhydro-N-acetylmuramate degradation. Its pathway is cell wall biogenesis; peptidoglycan recycling. Its function is as follows. Catalyzes the specific phosphorylation of 1,6-anhydro-N-acetylmuramic acid (anhMurNAc) with the simultaneous cleavage of the 1,6-anhydro ring, generating MurNAc-6-P. Is required for the utilization of anhMurNAc either imported from the medium or derived from its own cell wall murein, and thus plays a role in cell wall recycling. This is Anhydro-N-acetylmuramic acid kinase from Photorhabdus laumondii subsp. laumondii (strain DSM 15139 / CIP 105565 / TT01) (Photorhabdus luminescens subsp. laumondii).